The sequence spans 279 residues: 2-dehydro-3-deoxyphosphooctonate aldolase (279 aa).

It belongs to the KdsA family.

It is found in the cytoplasm. The catalysed reaction is D-arabinose 5-phosphate + phosphoenolpyruvate + H2O = 3-deoxy-alpha-D-manno-2-octulosonate-8-phosphate + phosphate. It functions in the pathway carbohydrate biosynthesis; 3-deoxy-D-manno-octulosonate biosynthesis; 3-deoxy-D-manno-octulosonate from D-ribulose 5-phosphate: step 2/3. It participates in bacterial outer membrane biogenesis; lipopolysaccharide biosynthesis. The sequence is that of 2-dehydro-3-deoxyphosphooctonate aldolase from Bartonella henselae (strain ATCC 49882 / DSM 28221 / CCUG 30454 / Houston 1) (Rochalimaea henselae).